A 218-amino-acid chain; its full sequence is Octanoyltransferase (218 aa).

The BPL/LPL catalytic domain occupies 45–218; the sequence is AGTADELWLL…TDALQRAIYS (174 aa). Residues 84–91, 151–153, and 164–166 each bind substrate; these read RGGQITYH, ALG, and GLA. Cysteine 182 functions as the Acyl-thioester intermediate in the catalytic mechanism.

The protein belongs to the LipB family.

It localises to the cytoplasm. It carries out the reaction octanoyl-[ACP] + L-lysyl-[protein] = N(6)-octanoyl-L-lysyl-[protein] + holo-[ACP] + H(+). Its pathway is protein modification; protein lipoylation via endogenous pathway; protein N(6)-(lipoyl)lysine from octanoyl-[acyl-carrier-protein]: step 1/2. Functionally, catalyzes the transfer of endogenously produced octanoic acid from octanoyl-acyl-carrier-protein onto the lipoyl domains of lipoate-dependent enzymes. Lipoyl-ACP can also act as a substrate although octanoyl-ACP is likely to be the physiological substrate. In Thiobacillus denitrificans (strain ATCC 25259 / T1), this protein is Octanoyltransferase.